The chain runs to 321 residues: Cytochrome f (321 aa).

An N-terminal signal peptide occupies residues 1–37 (MKIYRQIKQSFSITKIVFSFFISLLLNLVAQPTICQA). Heme-binding residues include phenylalanine 38, cysteine 58, cysteine 61, and histidine 62. A helical transmembrane segment spans residues 287–306 (VQGLIAFFISVVLAQIFLVL).

It belongs to the cytochrome f family. In terms of assembly, the 4 large subunits of the cytochrome b6-f complex are cytochrome b6, subunit IV (17 kDa polypeptide, petD), cytochrome f and the Rieske protein, while the 4 small subunits are PetG, PetL, PetM and PetN. The complex functions as a dimer. Heme serves as cofactor.

The protein localises to the plastid. The protein resides in the cyanelle thylakoid membrane. Functionally, component of the cytochrome b6-f complex, which mediates electron transfer between photosystem II (PSII) and photosystem I (PSI), cyclic electron flow around PSI, and state transitions. This is Cytochrome f (petA) from Cyanophora paradoxa.